The following is a 446-amino-acid chain: Inward rectifier potassium channel 4 (446 aa).

Over 1–55 (MHGHSRNGQAHVPRRKRRNRFVKKNGQCNVYFANLSNKSQRYMADIFTTCVDTRW) the chain is Cytoplasmic. A helical transmembrane segment spans residues 56-80 (RYMLMIFSAAFLVSWLFFGLLFWCI). The Extracellular portion of the chain corresponds to 81–120 (AFFHGDLEPSPSGPTAGGPGGNGGGAAPTAAKPCIMHVNG). The interval 91–111 (PSGPTAGGPGGNGGGAAPTAA) is val/Gly/Ala/Pro stretch. Residues 121–132 (FLGAFLFSVETQ) constitute an intramembrane region (helical; Pore-forming). Residues 133–139 (TTIGYGF) constitute an intramembrane region (pore-forming). A Selectivity filter motif is present at residues 134-139 (TIGYGF). Topologically, residues 140 to 148 (RCVTEECPL) are extracellular. Residues 149–170 (AVIAVVVQSIVGCVIDSFMIGT) traverse the membrane as a helical segment. Over 171–446 (IMAKMPRPKK…NISYRRESAI (276 aa)) the chain is Cytoplasmic. A PDZ-binding motif is present at residues 444–446 (SAI).

The protein belongs to the inward rectifier-type potassium channel (TC 1.A.2.1) family. KCNJ4 subfamily. In terms of assembly, homomultimeric and heteromultimeric association with KCNJ2 and KCNJ12. Interacts with DLG2 and DLG4. Associates, via its PDZ-recognition domain, with a complex containing LIN7A, LIN7B, LIN7C, DLG1, CASK and APBA1. Interacts with TAX1BP3. TAX1BP3 competes with LIN7 family members for KCNJ4 binding. As to expression, detected in kidney distal convoluted tubules (at protein level). Widely expressed throughout the brain. Also found in some peripheral tissues.

It is found in the cell membrane. The protein resides in the cytoplasmic vesicle membrane. It localises to the postsynaptic cell membrane. It catalyses the reaction K(+)(in) = K(+)(out). Functionally, inward rectifier potassium channels are characterized by a greater tendency to allow potassium to flow into the cell rather than out of it. Their voltage dependence is regulated by the concentration of extracellular potassium; as external potassium is raised, the voltage range of the channel opening shifts to more positive voltages. The inward rectification is mainly due to the blockage of outward current by internal magnesium. Can be blocked by extracellular barium and cesium. The sequence is that of Inward rectifier potassium channel 4 (Kcnj4) from Rattus norvegicus (Rat).